A 558-amino-acid polypeptide reads, in one-letter code: Pyrethroid hydrolase Ces2a (558 aa).

Residues 1–26 form the signal peptide; that stretch reads MPLARLPGWLCVVACGLLLLLQHVHG. Residues C95 and C122 are joined by a disulfide bond. At K209 the chain carries N6-succinyllysine. The active-site Acyl-ester intermediate is the S227. An N-linked (GlcNAc...) asparagine glycan is attached at N275. Residues C279 and C290 are joined by a disulfide bond. K296 is subject to N6-succinyllysine. The active-site Charge relay system is the E344. N361 carries N-linked (GlcNAc...) asparagine glycosylation. H456 serves as the catalytic Charge relay system.

It belongs to the type-B carboxylesterase/lipase family.

The protein localises to the microsome. The catalysed reaction is (-)-trans-permethrin + H2O = (3-phenoxyphenyl)methanol + (1S,3R)-3-(2,2-dichlorovinyl)-2,2-dimethylcyclopropanecarboxylate + H(+). It catalyses the reaction all-trans-retinyl hexadecanoate + H2O = all-trans-retinol + hexadecanoate + H(+). Its function is as follows. Carboxylesterases that catalyzes the hydrolysis of pyrethroids pesticides. Hydrolyzes permethrin faster than cypermethrin. Hydrolyzes retinyl esters. The protein is Pyrethroid hydrolase Ces2a of Mus musculus (Mouse).